A 649-amino-acid polypeptide reads, in one-letter code: Exoribonuclease 2 (649 aa).

The RNB domain occupies 190–517; it reads RKDLTDLDFI…NHRLLKSIIK (328 aa). Positions 562-644 constitute an S1 motif domain; it reads NQKFNAEITD…KTRSIIAKPV (83 aa).

Belongs to the RNR ribonuclease family. RNase II subfamily.

The protein resides in the cytoplasm. The enzyme catalyses Exonucleolytic cleavage in the 3'- to 5'-direction to yield nucleoside 5'-phosphates.. In terms of biological role, involved in mRNA degradation. Hydrolyzes single-stranded polyribonucleotides processively in the 3' to 5' direction. The chain is Exoribonuclease 2 from Buchnera aphidicola subsp. Acyrthosiphon pisum (strain 5A).